Reading from the N-terminus, the 270-residue chain is GTP cyclohydrolase FolE2 2 (270 aa).

The protein belongs to the GTP cyclohydrolase IV family.

It carries out the reaction GTP + H2O = 7,8-dihydroneopterin 3'-triphosphate + formate + H(+). Its pathway is cofactor biosynthesis; 7,8-dihydroneopterin triphosphate biosynthesis; 7,8-dihydroneopterin triphosphate from GTP: step 1/1. In terms of biological role, converts GTP to 7,8-dihydroneopterin triphosphate. The chain is GTP cyclohydrolase FolE2 2 from Dechloromonas aromatica (strain RCB).